Reading from the N-terminus, the 325-residue chain is MSHGEETELLLDPKEERFVLLPIKYHDIWKMYKKAESSFWTVEEVSLDKDIDDWGKLNAKERHFISYVLAFFAASDGIVNLNLVERFSTEVKVLEARFFYGFQMAIENIHSEMYSLLIDTYIRDNDEKNFLFDAIRTIPSVKEKADWAIRWIEDKNSDFATRLVAFACVEGIFFSGAFASIFWLKKRGLMPGLTFSNELISRDEGLHCEFACLLHYHLKKKCNRIKEVVMDAVEIEKKFLSESLPVNLIGMNCNLMCRYIEFVADRLLENLGEERVYNATNPFDFMENISLVGKTNFFDKRESQYQKAFVGIENGNDSFRIDVDF.

Asp76, Glu107, and His110 together coordinate Fe cation. Residue Tyr114 is part of the active site. Residues Glu170, Glu204, and His207 each contribute to the Fe cation site.

Belongs to the ribonucleoside diphosphate reductase small chain family. As to quaternary structure, heterodimer of a large and a small subunit. The cofactor is Fe cation.

It catalyses the reaction a 2'-deoxyribonucleoside 5'-diphosphate + [thioredoxin]-disulfide + H2O = a ribonucleoside 5'-diphosphate + [thioredoxin]-dithiol. Functionally, provides the precursors necessary for DNA synthesis. Catalyzes the biosynthesis of deoxyribonucleotides from the corresponding ribonucleotides. This is Ribonucleoside-diphosphate reductase small chain from Encephalitozoon cuniculi (strain GB-M1) (Microsporidian parasite).